The primary structure comprises 208 residues: Molybdenum cofactor guanylyltransferase (208 aa).

GTP contacts are provided by residues 10–12 (LAG), lysine 23, aspartate 69, and aspartate 103. Aspartate 103 is a binding site for Mg(2+).

The protein belongs to the MobA family. In terms of assembly, monomer. Requires Mg(2+) as cofactor.

The protein resides in the cytoplasm. The catalysed reaction is Mo-molybdopterin + GTP + H(+) = Mo-molybdopterin guanine dinucleotide + diphosphate. Its function is as follows. Transfers a GMP moiety from GTP to Mo-molybdopterin (Mo-MPT) cofactor (Moco or molybdenum cofactor) to form Mo-molybdopterin guanine dinucleotide (Mo-MGD) cofactor. This chain is Molybdenum cofactor guanylyltransferase, found in Mesorhizobium japonicum (strain LMG 29417 / CECT 9101 / MAFF 303099) (Mesorhizobium loti (strain MAFF 303099)).